The following is a 145-amino-acid chain: Anaerobic nitrite reductase NSHB5 (145 aa).

Positions G2 to K142 constitute a Globin domain. Residues E35–A39 carry the Homodimerization motif. Positions 45, 59, 61, 84, 88, and 89 each coordinate heme b. The Homodimerization motif lies at D96 to D108.

Belongs to the plant globin family. Homodimer. Requires heme b as cofactor. As to expression, expressed in embryonic (embryos, coleoptiles and seminal roots) and vegetative (leaves and roots) organs.

Its subcellular location is the cytoplasm. It localises to the nucleus. The catalysed reaction is Fe(III)-heme b-[protein] + nitric oxide + H2O = Fe(II)-heme b-[protein] + nitrite + 2 H(+). In terms of biological role, phytoglobin that reduces nitrite to nitric oxide under anoxic conditions (e.g. during flooding or in waterlogged soil). May not function as an oxygen storage or transport protein. Has an unusually high affinity for O(2) through an hexacoordinate heme iron because of a very low dissociation constant. This Oryza sativa subsp. japonica (Rice) protein is Anaerobic nitrite reductase NSHB5.